A 296-amino-acid chain; its full sequence is MMLPLQGAQMLQVLEKSLRRSLPASLKVYGTVFHINHGNPFNLKAVVDKWPDFNTVVVCPQEQDMTDDLDHYTNTYQIYSKDPQNCQEFLGSPELINWKQHLQIQSSQPSLNEAIQNLAVIKSFKVKQTQRILYMAAETAKELAPFLLKSKILSPSGGKPKAINQEMFKLSSMDVTHAQLVSKFWHFGGNERSQRFIERCIQTFPTCCLLGPEGTPVCWDLMDQTGEMRMAGTLPEYRLHGLVTYVIYSHAQKLGKLGFPVYSHVDYSNEAMQKMSYTLQHVPIPRSWNQWNCVPL.

Residues lysine 16, lysine 127, and lysine 141 each carry the N6-acetyllysine; alternate modification. An N6-succinyllysine; alternate mark is found at lysine 16, lysine 127, and lysine 141. Residue lysine 159 is modified to N6-acetyllysine. At lysine 169 the chain carries N6-succinyllysine. N6-acetyllysine; alternate is present on residues lysine 183 and lysine 256. An N6-succinyllysine; alternate mark is found at lysine 183 and lysine 256.

This sequence belongs to the glycine N-acyltransferase family.

It is found in the mitochondrion. The enzyme catalyses an acyl-CoA + glycine = an N-acylglycine + CoA + H(+). The catalysed reaction is benzoyl-CoA + glycine = N-benzoylglycine + CoA + H(+). Its function is as follows. Mitochondrial acyltransferase which transfers an acyl group to the N-terminus of glycine and glutamine, although much less efficiently. Can conjugate a multitude of substrates to form a variety of N-acylglycines, thereby detoxify xenobiotics, such as benzoic acid or salicylic acid, and endogenous organic acids, such as isovaleric acid. The polypeptide is Glycine N-acyltransferase (GLYAT) (Pongo abelii (Sumatran orangutan)).